The chain runs to 353 residues: 6-phosphogluconolactonase (353 aa).

Belongs to the cycloisomerase 2 family.

It localises to the cytoplasm. It carries out the reaction 6-phospho-D-glucono-1,5-lactone + H2O = 6-phospho-D-gluconate + H(+). Its pathway is carbohydrate degradation; pentose phosphate pathway; D-ribulose 5-phosphate from D-glucose 6-phosphate (oxidative stage): step 2/3. Functionally, carboxylic ester hydrolase that may be involved in ulvan degradation. Ulvan is the main polysaccharide component of the Ulvales (green seaweed) cell wall. It is composed of disaccharide building blocks comprising 3-sulfated rhamnose (Rha3S) linked to D-glucuronic acid (GlcA), L-iduronic acid (IduA), or D-xylose (Xyl). Catalyzes the hydrolysis of 6-phosphogluconolactone to 6-phosphogluconate. This Formosa agariphila (strain DSM 15362 / KCTC 12365 / LMG 23005 / KMM 3901 / M-2Alg 35-1) protein is 6-phosphogluconolactonase (pgl).